A 37-amino-acid polypeptide reads, in one-letter code: MTILNNLPSIFVPLVGLVFPAIAMASLSLHVQKNKIF.

A helical transmembrane segment spans residues 7–27; that stretch reads LPSIFVPLVGLVFPAIAMASL.

This sequence belongs to the PsaI family.

It is found in the plastid. The protein localises to the chloroplast thylakoid membrane. Its function is as follows. May help in the organization of the PsaL subunit. This Populus alba (White poplar) protein is Photosystem I reaction center subunit VIII.